We begin with the raw amino-acid sequence, 319 residues long: Pantothenate kinase (319 aa).

An ATP-binding site is contributed by 96 to 103 (GSVAVGKS).

It belongs to the prokaryotic pantothenate kinase family.

It localises to the cytoplasm. It carries out the reaction (R)-pantothenate + ATP = (R)-4'-phosphopantothenate + ADP + H(+). It participates in cofactor biosynthesis; coenzyme A biosynthesis; CoA from (R)-pantothenate: step 1/5. In Bacillus velezensis (strain DSM 23117 / BGSC 10A6 / LMG 26770 / FZB42) (Bacillus amyloliquefaciens subsp. plantarum), this protein is Pantothenate kinase.